A 2742-amino-acid chain; its full sequence is Neurobeachin-like protein 2 (2742 aa).

Disordered stretches follow at residues 1312–1333 (ALSPPPTELPADSSDVFLPSES) and 1356–1434 (LERA…QQTP). Positions 1384 to 1394 (TPSPLDGPRPF) are enriched in pro residues. A compositionally biased stretch (polar residues) spans 1421–1433 (GDDTSNTSNPQQT). Position 1855 is a phosphothreonine (Thr1855). The BEACH-type PH domain maps to 1903–2028 (EKREKLVLSA…LRNQVYSLLL (126 aa)). Residues 2041 to 2333 (RSPLEMLRAS…QLLKEPHPPR (293 aa)) form the BEACH domain. WD repeat units follow at residues 2374–2412 (LVLALVPHRQSHSFITQSSSDMLVTVSASGLLGTHTWLP), 2436–2479 (KLLS…SLPR), 2482–2519 (LLNQLSRHLDIVTCLALDTCGIYLISGSRDTTCMVWRL), 2532–2570 (KPVQVLYGHVAAVSCVAISTELDMAVSGSEDGTVIIHTV), 2577–2619 (AALR…TYSL), 2627–2662 (RLRASVTLTEQPTALTVAEDFVLLGTAQCSLHILHL), and 2670–2705 (PPLPMKVPVHSVSVTKERSHVLVGLEDGKLIVVGAG). A phosphoserine mark is found at Ser2727 and Ser2730.

Belongs to the WD repeat neurobeachin family.

Its subcellular location is the endoplasmic reticulum. In terms of biological role, probably involved in thrombopoiesis. Plays a role in the development or secretion of alpha-granules, that contain several growth factors important for platelet biogenesis. This Mus musculus (Mouse) protein is Neurobeachin-like protein 2 (Nbeal2).